A 360-amino-acid polypeptide reads, in one-letter code: S-adenosylmethionine:tRNA ribosyltransferase-isomerase (360 aa).

Belongs to the QueA family. In terms of assembly, monomer.

The protein resides in the cytoplasm. It carries out the reaction 7-aminomethyl-7-carbaguanosine(34) in tRNA + S-adenosyl-L-methionine = epoxyqueuosine(34) in tRNA + adenine + L-methionine + 2 H(+). It participates in tRNA modification; tRNA-queuosine biosynthesis. In terms of biological role, transfers and isomerizes the ribose moiety from AdoMet to the 7-aminomethyl group of 7-deazaguanine (preQ1-tRNA) to give epoxyqueuosine (oQ-tRNA). This is S-adenosylmethionine:tRNA ribosyltransferase-isomerase from Burkholderia mallei (strain NCTC 10247).